The following is an 857-amino-acid chain: RNA-directed RNA polymerase 2a (857 aa).

In terms of domain architecture, RdRp catalytic spans 511–624 (KYCLEIDLSK…FSQLPPVGDS (114 aa)). A disordered region spans residues 775-857 (RKKHGIERRC…PCERGEGTRA (83 aa)). 2 stretches are compositionally biased toward polar residues: residues 804 to 816 (KVSQ…TRSQ) and 824 to 840 (FKSQ…SGRS).

Belongs to the ssRNA positive-strand viruses RNA-directed RNA polymerase family. As to quaternary structure, interacts with replication protein 1a.

It carries out the reaction RNA(n) + a ribonucleoside 5'-triphosphate = RNA(n+1) + diphosphate. RNA-dependent RNA polymerase which replicates the viral genome composed of 3 RNA segments, RNA1, RNA2 and RNA3. The chain is RNA-directed RNA polymerase 2a from Cucumber mosaic virus (strain B) (CMV).